The following is an 893-amino-acid chain: MQTAEIRRRWLDFFERKEHTVVPSASLVSSDPSLMFTVAGMVPFIPYLTAQVPAPYKRATSVQKCLRTLDIDEVGKTTRHGTFFQMNGNFSFGDYFKREAVAFAWELLTTPEADGGLGFDPERLWTTVYLDDDEAFQLWREVGMPAERIQRRGKADNYWNTGQPGPGGPCSEIYFDRGPAYGAEGGPEADEDRYIEIWNLVFMQYQLSAVRTKVDFDVEGELPAKNIDTGMGLERVAFLKQGVDNMYEIDEVRPVLDKAAELSGRRYGAVHEDDVRMRVVADHVRSALMLIGDGVTPGNEGAGYVLRRLVRRAVRAMRLLGVEEPALPHLLPASMEVMSASYPQLRSDFERISAVAYAEEDAFRRTLVSGTAIFETAVAQTKAAGGSSLSGERAFALHDTYGFPIDLTLEMAAEAGVGVDEPGFRALMAEQVGRAKADAKAKKTGGVDLAIYRSTLEQLPAPVVFTGYEAAAGEARISVVLQGGVSTPSAPAGTDVEVVLDRTPFYAEGGGQLADHGTVTTTSGAVLAVSDVQQPVRGLYVHKGTVTSGELVAGDAVHAVVDAGRRRSISRAHTATHLVHQVVREHLGDTATQAGSQNAPGRMRFDYRSTAQVAGDVVRDIEAVVNERIHDDLEVSAAVMDRESALNSGAMALFGEKYGEKVRVVSIGEDWSKELCGGTHTLTSQQVGLVSIVSESSIGSGARRIEALVGADAFDFLTREHLLVNQLTEVVKARPEELPDRIGALLTRLGDAEKEIARLRGGQVLALAPTIAAKPVDKFGVRVVTHDAGPVSADDLRTLVLDVRSRLGEERPSVVAVAGVAKDRPVVVVATNAEARRWGVKAGELVRTAAKTLGGGGGGKDDLAQGGGQDPSKVPAALQGIEDFVGARVTGSV.

Residues His-573, His-577, Cys-676, and His-680 each contribute to the Zn(2+) site. Residues 853–872 (LGGGGGGKDDLAQGGGQDPS) are disordered.

It belongs to the class-II aminoacyl-tRNA synthetase family. Requires Zn(2+) as cofactor.

Its subcellular location is the cytoplasm. It carries out the reaction tRNA(Ala) + L-alanine + ATP = L-alanyl-tRNA(Ala) + AMP + diphosphate. Functionally, catalyzes the attachment of alanine to tRNA(Ala) in a two-step reaction: alanine is first activated by ATP to form Ala-AMP and then transferred to the acceptor end of tRNA(Ala). Also edits incorrectly charged Ser-tRNA(Ala) and Gly-tRNA(Ala) via its editing domain. The chain is Alanine--tRNA ligase from Kineococcus radiotolerans (strain ATCC BAA-149 / DSM 14245 / SRS30216).